A 645-amino-acid polypeptide reads, in one-letter code: UvrABC system protein C (645 aa).

One can recognise a GIY-YIG domain in the interval 12 to 91 (TGPGVYLYKN…IKQRKPRFNV (80 aa)). The 36-residue stretch at 202–237 (ADLERSLEVRMQEAAAAEQFELAAKYRDLLVTLHQL) folds into the UVR domain.

Belongs to the UvrC family. In terms of assembly, interacts with UvrB in an incision complex.

The protein resides in the cytoplasm. In terms of biological role, the UvrABC repair system catalyzes the recognition and processing of DNA lesions. UvrC both incises the 5' and 3' sides of the lesion. The N-terminal half is responsible for the 3' incision and the C-terminal half is responsible for the 5' incision. In Acidobacterium capsulatum (strain ATCC 51196 / DSM 11244 / BCRC 80197 / JCM 7670 / NBRC 15755 / NCIMB 13165 / 161), this protein is UvrABC system protein C.